The chain runs to 587 residues: Pentatricopeptide repeat-containing protein OGR1, mitochondrial (587 aa).

The transit peptide at 1 to 30 (MSVSAAARHLESLLPRLASLRHYLQFHARL) directs the protein to the mitochondrion. 8 PPR repeats span residues 145–179 (DVRL…DVAT), 200–203 (FHRL), 217–251 (NEVT…GLDR), 252–286 (NVRV…DQTL), 287–315 (VSYN…MPTR), 319–349 (DGVT…MRVA), 351–381 (NMKH…MPFP), and 383–417 (DIVL…GSNV). The interval 386 to 461 (LWQTLLGAAK…VPGFSYTEID (76 aa)) is type E motif. The interval 462–492 (GVMHKFINGDKEHPRWQEIYRALEDIVSRIS) is type E(+) motif. The type DYW motif stretch occupies residues 493-587 (ELGYEPETSN…DGQCSCRDYW (95 aa)).

It is found in the mitochondrion. Its function is as follows. Involved in multiple sites RNA editing events in mitochondria. Essential for C-to-U RNA editing at seven specific sites of nad2, nad4, cox2, cox3 and ccmC transcripts, all coding for proteins involved in the mitochondrial electron transport chain coupled to ATP generation. Required for normal growth and development. In Oryza sativa subsp. japonica (Rice), this protein is Pentatricopeptide repeat-containing protein OGR1, mitochondrial.